A 617-amino-acid polypeptide reads, in one-letter code: Kelch-like protein 9 (617 aa).

The region spanning 50 to 119 is the BTB domain; that stretch reads CDVTLVPGDG…IYTAKLSLNM (70 aa). One can recognise a BACK domain in the interval 154 to 255; it reads CVEVGRIANT…TPQDLINYVQ (102 aa). 6 Kelch repeats span residues 299-347, 348-399, 400-446, 448-493, 495-545, and 546-594; these read HLVT…VIGN, FLYV…ALKG, HLYA…VYGG, MYIS…TVGD, LYVI…VFEN, and KIYV…TLTV. The segment at 595 to 617 is disordered; that stretch reads FPPEENPGSPSRESPLSAPSDHS.

As to quaternary structure, component of the BCR(KLHL9-KLHL13) E3 ubiquitin ligase complex, at least composed of CUL3, KLHL9, KLHL13 and RBX1. Interacts with AURKB.

The protein operates within protein modification; protein ubiquitination. Substrate-specific adapter of a BCR (BTB-CUL3-RBX1) E3 ubiquitin-protein ligase complex required for mitotic progression and cytokinesis. The BCR(KLHL9-KLHL13) E3 ubiquitin ligase complex mediates the ubiquitination of AURKB and controls the dynamic behavior of AURKB on mitotic chromosomes and thereby coordinates faithful mitotic progression and completion of cytokinesis. The sequence is that of Kelch-like protein 9 (Klhl9) from Mus musculus (Mouse).